We begin with the raw amino-acid sequence, 491 residues long: Glycylpeptide N-tetradecanoyltransferase (491 aa).

Position 45-48 (45-48 (HKFW)) interacts with tetradecanoyl-CoA. The tract at residues 53–79 (VPQITGSGASAPMEEGPIDDPKTPADV) is disordered. Residues 182–184 (LCV) and 190–194 (SKRLA) each bind tetradecanoyl-CoA. Leu-491 acts as the Proton acceptor; via carboxylate in catalysis.

The protein belongs to the NMT family. In terms of assembly, monomer.

The protein resides in the cytoplasm. The catalysed reaction is N-terminal glycyl-[protein] + tetradecanoyl-CoA = N-tetradecanoylglycyl-[protein] + CoA + H(+). Adds a myristoyl group to the N-terminal glycine residue of certain cellular proteins. The sequence is that of Glycylpeptide N-tetradecanoyltransferase from Cryptococcus neoformans (Filobasidiella neoformans).